Reading from the N-terminus, the 176-residue chain is Peptide deformylase (176 aa).

The Fe cation site is built by cysteine 94 and histidine 136. Glutamate 137 is a catalytic residue. Residue histidine 140 coordinates Fe cation.

This sequence belongs to the polypeptide deformylase family. Fe(2+) is required as a cofactor.

The catalysed reaction is N-terminal N-formyl-L-methionyl-[peptide] + H2O = N-terminal L-methionyl-[peptide] + formate. In terms of biological role, removes the formyl group from the N-terminal Met of newly synthesized proteins. Requires at least a dipeptide for an efficient rate of reaction. N-terminal L-methionine is a prerequisite for activity but the enzyme has broad specificity at other positions. The polypeptide is Peptide deformylase (Bartonella quintana (strain Toulouse) (Rochalimaea quintana)).